The chain runs to 615 residues: Chaperone protein DnaK (615 aa).

Thr-177 carries the phosphothreonine; by autocatalysis modification. A disordered region spans residues 567–615 (TKESQGIAMKAYQKAQEKQAQEKGTQENTTAKNEKPQDEVVDADFEEKK). Basic and acidic residues predominate over residues 581–591 (AQEKQAQEKGT). The span at 605–615 (EVVDADFEEKK) shows a compositional bias: acidic residues.

Belongs to the heat shock protein 70 family.

Acts as a chaperone. In Onion yellows phytoplasma (strain OY-M), this protein is Chaperone protein DnaK.